A 387-amino-acid chain; its full sequence is UDP-N-acetylglucosamine--N-acetylmuramyl-(pentapeptide) pyrophosphoryl-undecaprenol N-acetylglucosamine transferase (387 aa).

The tract at residues 1–22 is disordered; that stretch reads MSEHVRSAGPPQASTAPSGGSA. UDP-N-acetyl-alpha-D-glucosamine contacts are provided by residues 41 to 43, Asn-158, Arg-194, Ser-222, Ile-276, and Gln-321; that span reads TGG.

This sequence belongs to the glycosyltransferase 28 family. MurG subfamily.

Its subcellular location is the cell inner membrane. It catalyses the reaction di-trans,octa-cis-undecaprenyl diphospho-N-acetyl-alpha-D-muramoyl-L-alanyl-D-glutamyl-meso-2,6-diaminopimeloyl-D-alanyl-D-alanine + UDP-N-acetyl-alpha-D-glucosamine = di-trans,octa-cis-undecaprenyl diphospho-[N-acetyl-alpha-D-glucosaminyl-(1-&gt;4)]-N-acetyl-alpha-D-muramoyl-L-alanyl-D-glutamyl-meso-2,6-diaminopimeloyl-D-alanyl-D-alanine + UDP + H(+). It functions in the pathway cell wall biogenesis; peptidoglycan biosynthesis. Cell wall formation. Catalyzes the transfer of a GlcNAc subunit on undecaprenyl-pyrophosphoryl-MurNAc-pentapeptide (lipid intermediate I) to form undecaprenyl-pyrophosphoryl-MurNAc-(pentapeptide)GlcNAc (lipid intermediate II). This is UDP-N-acetylglucosamine--N-acetylmuramyl-(pentapeptide) pyrophosphoryl-undecaprenol N-acetylglucosamine transferase from Polaromonas sp. (strain JS666 / ATCC BAA-500).